The sequence spans 2167 residues: RNA editing associated helicase 2 (2167 aa).

A mitochondrion-targeting transit peptide spans 1-30 (MRAIRLTVACRYLGPFRSVTLSPVVLPVRL). Disordered regions lie at residues 503 to 593 (RARG…DEAT) and 937 to 969 (ENAT…PTNV). Positions 532–541 (SSTQTPSSST) are enriched in low complexity. The 72-residue stretch at 1024 to 1095 (DAKTVLQRYC…AMHALALLRR (72 aa)) folds into the DRBM domain. One can recognise a Helicase ATP-binding domain in the interval 1348–1513 (LRAISSNQIV…FGNAPIINVE (166 aa)). Position 1361–1368 (1361–1368 (GTTGCGKT)) interacts with ATP. Positions 1366-1367 (GK) match the Important for binding to gRNA motif. The DEAH box motif lies at 1460-1463 (DEIH). The region spanning 1585 to 1762 (AIDHAVRSLD…SLCLQILALD (178 aa)) is the Helicase C-terminal domain. A disordered region spans residues 2132–2167 (IIEPCTEPKGGSSEAEKTHVNSSHTPTTSAEAGGDS). The span at 2151–2161 (VNSSHTPTTSA) shows a compositional bias: polar residues.

It belongs to the DEAD box helicase family. DEAH subfamily. In terms of assembly, component of the REH2-associated complex (REH2C) composed of helicase REH2, associated factors H2F1 and H2F2, and mRNAs at various editing stages; the formation of the complex is RNA-independent. Within the complex, interacts with H2F1; the interaction is direct. Interacts transiently, in a RNA-dependent manner, with various editing complexes including the RNA editing core (RECC) complex, the gRNA-binding (GRBC) complex (also known as the MRB1 complex) and the RNA editing mediator (REMC) complex. Interacts with GAP1/GRBC2 via RNA forming a variant of the GRBC complex known as REH2-GRBC complex. Interacts with mitochondrial ribosomes.

It localises to the mitochondrion. The catalysed reaction is ATP + H2O = ADP + phosphate + H(+). Its function is as follows. ATP-dependent RNA helicase that unwinds RNA in a 3' to 5' direction and that plays an important role in mitochondrial mRNA editing, a process involving the addition and deletion of uridine (U) nucleotides in the pre-mRNA. As part of the RET2-containing gRNA-binding (RET2-GRBC) complex, acts as a scaffold for the assembly of mRNA-gRNA hybrids and the recruitment of the RNA editing core (RECC) complex. Regulates several steps of mRNA editing by the MRBC3010/GRBC6 containing gRNA-binding (MRBC3010-GRBC) complex including loading of unedited mRNA, editing in the first sequence block and subsequent editing progression across multiple sequence blocks. Also, regulates the RNA substrate content of the MRBC3010-GRBC complex as well as the association of this complex with mitoribosomes. This Trypanosoma brucei brucei (strain 927/4 GUTat10.1) protein is RNA editing associated helicase 2.